We begin with the raw amino-acid sequence, 121 residues long: Large ribosomal subunit protein uL14 (121 aa).

The protein belongs to the universal ribosomal protein uL14 family. As to quaternary structure, part of the 50S ribosomal subunit. Forms a cluster with proteins L3 and L19. In the 70S ribosome, L14 and L19 interact and together make contacts with the 16S rRNA in bridges B5 and B8.

Binds to 23S rRNA. Forms part of two intersubunit bridges in the 70S ribosome. The sequence is that of Large ribosomal subunit protein uL14 from Synechococcus elongatus (strain ATCC 33912 / PCC 7942 / FACHB-805) (Anacystis nidulans R2).